The following is a 239-amino-acid chain: Large ribosomal subunit protein uL2 (239 aa).

Positions H202–G239 are disordered. Positions K225–G239 are enriched in basic residues.

The protein belongs to the universal ribosomal protein uL2 family. Part of the 50S ribosomal subunit. Forms a bridge to the 30S subunit in the 70S ribosome.

In terms of biological role, one of the primary rRNA binding proteins. Required for association of the 30S and 50S subunits to form the 70S ribosome, for tRNA binding and peptide bond formation. It has been suggested to have peptidyltransferase activity; this is somewhat controversial. Makes several contacts with the 16S rRNA in the 70S ribosome. In Desulfurococcus amylolyticus (strain DSM 18924 / JCM 16383 / VKM B-2413 / 1221n) (Desulfurococcus kamchatkensis), this protein is Large ribosomal subunit protein uL2.